Reading from the N-terminus, the 41-residue chain is Bacteriocin (41 aa).

The cysteines at positions 9 and 14 are disulfide-linked.

It localises to the secreted. Its function is as follows. Bacteriocin active against S.aureus, S.typhi, B.thuringiensis, Klebsiella sp., E.coli KL16 and E.coli Gj137. This is Bacteriocin from Lactococcus sp.